A 383-amino-acid polypeptide reads, in one-letter code: Probable acyl-CoA dehydrogenase YdiO (383 aa).

The protein belongs to the acyl-CoA dehydrogenase family. FAD is required as a cofactor.

The enzyme catalyses a 2,3-saturated acyl-CoA + A = a 2,3-dehydroacyl-CoA + AH2. This is Probable acyl-CoA dehydrogenase YdiO (ydiO) from Escherichia coli O157:H7.